The following is a 298-amino-acid chain: Putative insertion sequence ATP-binding protein y4iQ/y4nD/y4sD (298 aa).

An ATP-binding site is contributed by 114 to 121; that stretch reads GPPGGGKS. Positions 276 to 298 are disordered; the sequence is RQSEHDETLASDNQHDTFMPTAT.

It belongs to the IS21/IS1162 putative ATP-binding protein family.

In Sinorhizobium fredii (strain NBRC 101917 / NGR234), this protein is Putative insertion sequence ATP-binding protein y4iQ/y4nD/y4sD.